A 1228-amino-acid polypeptide reads, in one-letter code: Myosin-1 (1228 aa).

Residues Met-1–Ala-27 form a disordered region. In terms of domain architecture, Myosin motor spans Val-37–Asp-716. Residue Gly-130–Thr-137 participates in ATP binding. Ser-358 carries the post-translational modification Phosphoserine. The interval Thr-405–Ala-487 is actin-binding. 2 consecutive IQ domains span residues His-720 to Cys-740 and Ala-741 to Lys-768. Residues Arg-776–Ala-962 enclose the TH1 domain. Disordered regions lie at residues Ser-953–Ala-1040, Gln-1053–Pro-1109, and Gln-1169–Trp-1228. Residues Gln-1053–Gly-1063 show a composition bias toward polar residues. Residues Gln-1064–Lys-1092 are compositionally biased toward low complexity. Positions Ala-1093–Pro-1106 are enriched in pro residues. The SH3 domain maps to Pro-1109–Gly-1170. Residues Pro-1180–Ala-1194 show a composition bias toward low complexity.

This sequence belongs to the TRAFAC class myosin-kinesin ATPase superfamily. Myosin family. Phosphorylation of the TEDS site (Ser-358) is required for the polarization of the actin cytoskeleton. Phosphorylation probably activates the myosin-I ATPase activity.

It is found in the cytoplasm. It localises to the cytoskeleton. The protein localises to the actin patch. Its function is as follows. Type-I myosin implicated in the organization of the actin cytoskeleton. Required for proper actin cytoskeleton polarization. At the cell cortex, assembles in patch-like structures together with proteins from the actin-polymerizing machinery and promotes actin assembly. Functions as actin nucleation-promoting factor (NPF) for the Arp2/3 complex. The sequence is that of Myosin-1 (MYO1) from Yarrowia lipolytica (strain CLIB 122 / E 150) (Yeast).